We begin with the raw amino-acid sequence, 367 residues long: Cyclin-D3-2 (367 aa).

A compositionally biased stretch (low complexity) spans 324 to 335 (STTASVSSSSSS). The tract at residues 324–347 (STTASVSSSSSSPEPLLKRRRVQE) is disordered.

It belongs to the cyclin family. Cyclin D subfamily. Interacts with CDKA-1. In terms of tissue distribution, expressed in developing vegetative and floral primordia.

Functionally, promotes divisions in the guard cells (GCs) after the guard mother cells (GMC) symmetric division when in the presence of CDKA-1. The sequence is that of Cyclin-D3-2 (CYCD3-2) from Arabidopsis thaliana (Mouse-ear cress).